Consider the following 149-residue polypeptide: Nucleoside diphosphate kinase 1 (149 aa).

Residues Lys9, Phe57, Arg85, Thr91, Arg102, and Asn112 each contribute to the ATP site. The active-site Pros-phosphohistidine intermediate is the His115.

In terms of assembly, homohexamer. Mg(2+) serves as cofactor.

It catalyses the reaction a 2'-deoxyribonucleoside 5'-diphosphate + ATP = a 2'-deoxyribonucleoside 5'-triphosphate + ADP. The enzyme catalyses a ribonucleoside 5'-diphosphate + ATP = a ribonucleoside 5'-triphosphate + ADP. In terms of biological role, major role in the synthesis of nucleoside triphosphates other than ATP. The ATP gamma phosphate is transferred to the NDP beta phosphate via a ping-pong mechanism, using a phosphorylated active-site intermediate. This NDK is microtubule-associated. The polypeptide is Nucleoside diphosphate kinase 1 (NDKR) (Oryza sativa subsp. indica (Rice)).